The chain runs to 238 residues: Glycerol uptake facilitator protein 4 (238 aa).

Transmembrane regions (helical) follow at residues 2–22 (IHQL…GVGV) and 39–59 (IFAI…FGNV). Positions 62-64 (NPA) match the NPA 1 motif. A run of 3 helical transmembrane segments spans residues 80-100 (FIPY…IVWI), 135-155 (FFVE…ISEV), and 158-178 (PGIV…GLGG). The NPA 2 motif lies at 185 to 187 (NLA). Residues 211 to 231 (YGIIVPGIAPFVGAACAALFM) traverse the membrane as a helical segment.

It belongs to the MIP/aquaporin (TC 1.A.8) family.

It is found in the cell membrane. Its function is as follows. Transporter that facilitates the transmembrane diffusion of water, dihydroxyacetone, glycerol, urea, H(2)O(2) and D/L-lactic acid. Is involved in the cellular racemization of lactate and lactate metabolism, but has likely a more general physiological role. The transported molecule is indeed lactic acid and not the lactate anion, in agreement with the assumption that, with very few exceptions, MIPs (major intrinsic proteins) only facilitate the transport of uncharged solutes. The protein is Glycerol uptake facilitator protein 4 of Lactiplantibacillus plantarum (strain ATCC BAA-793 / NCIMB 8826 / WCFS1) (Lactobacillus plantarum).